Here is a 574-residue protein sequence, read N- to C-terminus: Serine carboxypeptidase ctsa-3.1 (574 aa).

The signal sequence occupies residues methionine 1–glycine 19. 2 N-linked (GlcNAc...) asparagine glycosylation sites follow: asparagine 48 and asparagine 163. Residue serine 172 is part of the active site. 4 N-linked (GlcNAc...) asparagine glycosylation sites follow: asparagine 241, asparagine 408, asparagine 414, and asparagine 426. Catalysis depends on residues aspartate 441 and histidine 507. Asparagine 534 is a glycosylation site (N-linked (GlcNAc...) asparagine).

Belongs to the peptidase S10 family.

This Caenorhabditis elegans protein is Serine carboxypeptidase ctsa-3.1.